A 461-amino-acid polypeptide reads, in one-letter code: Cysteine--tRNA ligase (461 aa).

Cys28 is a binding site for Zn(2+). The 'HIGH' region signature appears at 30-40; that stretch reads ITVYDLCHIGH. Residues Cys209, His234, and Glu238 each coordinate Zn(2+). The 'KMSKS' region signature appears at 266 to 270; the sequence is KMSKS. ATP is bound at residue Lys269.

This sequence belongs to the class-I aminoacyl-tRNA synthetase family. Monomer. Zn(2+) is required as a cofactor.

The protein localises to the cytoplasm. The catalysed reaction is tRNA(Cys) + L-cysteine + ATP = L-cysteinyl-tRNA(Cys) + AMP + diphosphate. The sequence is that of Cysteine--tRNA ligase from Escherichia coli O6:K15:H31 (strain 536 / UPEC).